We begin with the raw amino-acid sequence, 402 residues long: MEGLVPVQRLPIKVASPSLYRCNNSVSIRRSISGFAMDRKINFRAPSQFSIRAQQSDLKESLAVSSSSVEDKGNVLRIKEWEVEMYQEELAISQGIRIRRKPPSKAPLGYSGPFELRLHNNDADSPRNILEEITWYKDVEVSRMKELNPLDVLKKAVEDAPPTRDFVGALRMAHKRTGFPGLIAEVKKASPSRGILKENFDPVEIAQAYEKGGAACLSVLTDQKYFQGGFENLEAIRSAGVKCPLLCKEFVVDPWQIYYARTKGADAVLLIAAVLADLEITFLLKICKKLSLAALVEVHDEREMGRVLGIEGIELVGINNRSLETFEVDISNTKKLLEGEHGRQIRERDMIVVGESGLFTPDDIAYVQAAGVKAVLVGESIVKQNDPEKGIAGLFGRNISHT.

Residues 1 to 65 constitute a chloroplast transit peptide; it reads MEGLVPVQRL…SDLKESLAVS (65 aa).

It belongs to the TrpC family. In terms of tissue distribution, expressed in leaves.

The protein resides in the plastid. It localises to the chloroplast. The catalysed reaction is 1-(2-carboxyphenylamino)-1-deoxy-D-ribulose 5-phosphate + H(+) = (1S,2R)-1-C-(indol-3-yl)glycerol 3-phosphate + CO2 + H2O. The protein operates within amino-acid biosynthesis; L-tryptophan biosynthesis; L-tryptophan from chorismate: step 4/5. Its function is as follows. Indole-3-glycerol phosphate synthase required for tryptophan biosynthesis. This Arabidopsis thaliana (Mouse-ear cress) protein is Indole-3-glycerol phosphate synthase, chloroplastic.